We begin with the raw amino-acid sequence, 886 residues long: DNA repair and recombination protein RAD54B (886 aa).

The span at 1 to 12 (MRRSAAPSQVQG) shows a compositional bias: polar residues. The disordered stretch occupies residues 1-95 (MRRSAAPSQV…ASKEITESKA (95 aa)). Position 14 is a phosphoserine (Ser-14). The span at 47–62 (AEQSQNDPGVCSSNPC) shows a compositional bias: polar residues. Basic and acidic residues-rich tracts occupy residues 67–76 (IPREVGDGTR) and 86–95 (ASKEITESKA). The Helicase ATP-binding domain maps to 291–458 (GMRAVGKCGA…FALVDFVNPG (168 aa)). An ATP-binding site is contributed by 304 to 311 (DEMGLGKT). The DEGH box motif lies at 409 to 412 (DEGH). Residues 627–788 (KLLAVIHELR…HIQFSVEELK (162 aa)) form the Helicase C-terminal domain.

Belongs to the SNF2/RAD54 helicase family. In terms of assembly, interacts with RAD51 through the NH2-terminal domain.

The protein resides in the nucleus. Its function is as follows. Involved in DNA repair and mitotic recombination. May play an active role in recombination processes in concert with other members of the RAD52 epistasis group. The sequence is that of DNA repair and recombination protein RAD54B (Rad54b) from Mus musculus (Mouse).